Consider the following 855-residue polypeptide: DNA mismatch repair protein MutS (855 aa).

Position 617–624 (617–624) interacts with ATP; that stretch reads GPNMGGKS.

Belongs to the DNA mismatch repair MutS family.

Its function is as follows. This protein is involved in the repair of mismatches in DNA. It is possible that it carries out the mismatch recognition step. This protein has a weak ATPase activity. This is DNA mismatch repair protein MutS from Baumannia cicadellinicola subsp. Homalodisca coagulata.